The sequence spans 426 residues: Oligouridylate-binding protein 1A (426 aa).

A disordered region spans residues 1–26; it reads MQNQRLIKQQQQQQQQQHQQAMIQQA. The span at 9–26 shows a compositional bias: low complexity; it reads QQQQQQQQQHQQAMIQQA. 2 RRM domains span residues 63–137 and 148–226; these read RSVY…WAYA and FNIF…WATK. The segment at 230-268 is disordered; sequence FGEDKHSSDGKSVVELTNGSSEDGRELSNEDAPENNPQF. Ser-250 carries the post-translational modification Phosphoserine. The RRM 3 domain occupies 269–344; the sequence is TTVYVGNLSP…RQIRCSWGNK (76 aa).

As to quaternary structure, interacts with UBA1A and UBA2A.

It localises to the nucleus. In terms of biological role, heterogeneous nuclear ribonucleoprotein (hnRNP)-like protein that acts as a component of the pre-mRNA processing machinery. Functions to facilitate the nuclear maturation of plant pre-mRNAs. This chain is Oligouridylate-binding protein 1A (UBP1A), found in Arabidopsis thaliana (Mouse-ear cress).